The chain runs to 204 residues: MEKSNDHDKASHGGSGGGATEKWEETSPGIRTAETMLRLAPVGLCVAALVVMLKDSETNEFGSISYSNLTAFRYLVHANGICAGYSLLSAAIAAMPRSSSTMPRVWTFFCLDQLLTYLVLAAGAVSAEVLYLAYNGDSAITWSDACSSYGGFCHRATASVIITFFVVCFYILLSLISSYKLFTRFDPPSIVDSDKTLEVAVFGS.

Positions methionine 1–serine 11 are enriched in basic and acidic residues. The interval methionine 1–glutamate 25 is disordered. Topologically, residues methionine 1 to threonine 32 are cytoplasmic. Residues alanine 33–leucine 53 traverse the membrane as a helical segment. The Extracellular segment spans residues lysine 54–tyrosine 74. Residue asparagine 68 is glycosylated (N-linked (GlcNAc...) asparagine). The helical transmembrane segment at leucine 75–methionine 95 threads the bilayer. The Cytoplasmic portion of the chain corresponds to proline 96–glutamine 113. The chain crosses the membrane as a helical span at residues leucine 114–tyrosine 134. At asparagine 135 to arginine 155 the chain is on the extracellular side. Residues alanine 156–isoleucine 176 traverse the membrane as a helical segment. Over serine 177 to serine 204 the chain is Cytoplasmic.

It belongs to the Casparian strip membrane proteins (CASP) family. Homodimer and heterodimers.

The protein resides in the cell membrane. This chain is CASP-like protein 2A1, found in Arabidopsis lyrata subsp. lyrata (Lyre-leaved rock-cress).